The following is a 213-amino-acid chain: Agglutinin isolectin 2 (213 aa).

Positions 1-27 (MRKMMSTMALTLGAAVFLAFAAATAQA) are cleaved as a signal peptide. Gln28 carries the post-translational modification Pyrrolidone carboxylic acid. Chitin-binding type-1 domains are found at residues 28 to 69 (QRCG…ACWT), 70 to 112 (SKRC…PCRA), 113 to 155 (DIKC…ACST), and 156 to 198 (DKPC…GCDA). 16 disulfide bridges follow: Cys30/Cys45, Cys39/Cys51, Cys44/Cys58, Cys62/Cys67, Cys73/Cys88, Cys82/Cys94, Cys87/Cys101, Cys105/Cys110, Cys116/Cys131, Cys125/Cys137, Cys130/Cys144, Cys148/Cys153, Cys159/Cys174, Cys168/Cys180, Cys173/Cys187, and Cys191/Cys196. A substrate-binding site is contributed by 37–39 (MEC). 89–100 (SQYGHCGFGAEY) is a binding site for substrate. 141–142 (SE) serves as a coordination point for substrate. Residues 199–213 (VFAGAITANSTLLAE) constitute a propeptide that is removed on maturation.

Homodimer, u-shaped.

In terms of biological role, N-acetyl-D-glucosamine / N-acetyl-D-neuraminic acid binding lectin. This Triticum aestivum (Wheat) protein is Agglutinin isolectin 2.